The following is a 272-amino-acid chain: MTVLDDINAGAREDMEARRRLVSLAELKDRAAAAAPARDAWAALGGDDSTRKQLKVIAEIKRRSPSKGDLASIADPAELAVQYADGGASVISVLTEQRRFSGSLADFDAVRKAVDVPLLRKDFTVDEYQIWEARAHGADLILLIVASLTDAELRDFSQLTRELGMNALVETHTAEEIERAVAADARIIGVNVRNLKTLDVDRSVFASLSGGIPPEAVIVAESGVRGVDDVRHYAASGANAVLVGEALVSDATPRERIAEFTAAGAEAIAARV.

The protein belongs to the TrpC family.

The catalysed reaction is 1-(2-carboxyphenylamino)-1-deoxy-D-ribulose 5-phosphate + H(+) = (1S,2R)-1-C-(indol-3-yl)glycerol 3-phosphate + CO2 + H2O. It functions in the pathway amino-acid biosynthesis; L-tryptophan biosynthesis; L-tryptophan from chorismate: step 4/5. The sequence is that of Indole-3-glycerol phosphate synthase from Arthrobacter sp. (strain FB24).